The following is a 354-amino-acid chain: Methionine import ATP-binding protein MetN (354 aa).

An ABC transporter domain is found at 8–250 (LDHIDITFRQ…PKEALTQEFI (243 aa)). 42-49 (GYSGAGKS) contacts ATP.

This sequence belongs to the ABC transporter superfamily. Methionine importer (TC 3.A.1.24) family. In terms of assembly, the complex is composed of two ATP-binding proteins (MetN), two transmembrane proteins (MetI) and a solute-binding protein (MetQ).

It localises to the cell membrane. The catalysed reaction is L-methionine(out) + ATP + H2O = L-methionine(in) + ADP + phosphate + H(+). It catalyses the reaction D-methionine(out) + ATP + H2O = D-methionine(in) + ADP + phosphate + H(+). In terms of biological role, part of the ABC transporter complex MetNIQ involved in methionine import. Responsible for energy coupling to the transport system. This Streptococcus pyogenes serotype M2 (strain MGAS10270) protein is Methionine import ATP-binding protein MetN.